Here is a 467-residue protein sequence, read N- to C-terminus: Probable circularly permuted 1,3-beta-glucanase TOS1 (467 aa).

The N-terminal stretch at 1-21 is a signal peptide; the sequence is MKFSSTTLLAGLSSLTATVSA. A compositionally biased stretch (low complexity) spans 158–172; it reads PAVSSAAADDNANSG. Disordered stretches follow at residues 158–187 and 200–223; these read PAVS…GYGS and SDIS…TASV. Over residues 173 to 185 the composition is skewed to gly residues; sequence SGSGSSAGSGSGY. Residues 203–222 are compositionally biased toward low complexity; the sequence is STKSAPTSTSAQPSSSETAS. Positions 374–379 match the ExDxxE motif motif; that stretch reads ELDLFE. The tract at residues 391-413 is disordered; that stretch reads HLHDGQGSSQNSNNGGGGSQDYF.

It belongs to the PGA52 family. Cleaved by KEX2 in vitro.

The protein localises to the secreted. The catalysed reaction is Hydrolysis of (1-&gt;3)-beta-D-glucosidic linkages in (1-&gt;3)-beta-D-glucans.. In terms of biological role, probable circularly permuted 1,3-beta-glucanase involved in cell wall modification through beta-1,3-glucan network alterations such as increased branching or remodeling. Plays a role in engulfment by host macrophages. The protein is Probable circularly permuted 1,3-beta-glucanase TOS1 of Candida albicans (strain SC5314 / ATCC MYA-2876) (Yeast).